A 692-amino-acid chain; its full sequence is Elongation factor G (692 aa).

The tr-type G domain maps to 8 to 282 (EKTRNIGIMA…AVVEYMPAPT (275 aa)). GTP contacts are provided by residues 17–24 (AHIDAGKT), 81–85 (DTPGH), and 135–138 (NKMD). The disordered stretch occupies residues 285–304 (PNIKGVHPETGEADERHSSD). The segment covering 290–304 (VHPETGEADERHSSD) has biased composition (basic and acidic residues).

Belongs to the TRAFAC class translation factor GTPase superfamily. Classic translation factor GTPase family. EF-G/EF-2 subfamily.

Its subcellular location is the cytoplasm. Catalyzes the GTP-dependent ribosomal translocation step during translation elongation. During this step, the ribosome changes from the pre-translocational (PRE) to the post-translocational (POST) state as the newly formed A-site-bound peptidyl-tRNA and P-site-bound deacylated tRNA move to the P and E sites, respectively. Catalyzes the coordinated movement of the two tRNA molecules, the mRNA and conformational changes in the ribosome. This Desulfitobacterium hafniense (strain Y51) protein is Elongation factor G.